The sequence spans 268 residues: Centromere protein Q (268 aa).

The disordered stretch occupies residues 1–31; sequence MSGKANASKKNFEQLKRNPKRKKDNEEVVLS. A Phosphoserine modification is found at Ser31. Positions 170–203 form a coiled coil; the sequence is ELMTGNIQSLKNKIQILASEVEEEEERVKQIHQI. Ser249 carries the post-translational modification Phosphoserine.

This sequence belongs to the CENP-Q/OKP1 family. In terms of assembly, component of the CENPA-CAD complex, composed of CENPI, CENPK, CENPL, CENPO, CENPP, CENPQ, CENPR and CENPS. The CENPA-CAD complex interacts with the CENPA-NAC complex, at least composed of CENPA, CENPC, CENPH, CENPM, CENPN, CENPT and CENPU.

The protein resides in the nucleus. It is found in the chromosome. It localises to the centromere. Component of the CENPA-CAD (nucleosome distal) complex, a complex recruited to centromeres which is involved in assembly of kinetochore proteins, mitotic progression and chromosome segregation. May be involved in incorporation of newly synthesized CENPA into centromeres via its interaction with the CENPA-NAC complex. Plays an important role in chromosome congression and in the recruitment of CENP-O complex (which comprises CENPO, CENPP, CENPQ and CENPU), CENPE and PLK1 to the kinetochores. In Macaca fascicularis (Crab-eating macaque), this protein is Centromere protein Q (CENPQ).